A 154-amino-acid chain; its full sequence is SsrA-binding protein (154 aa).

A disordered region spans residues Glu134 to Arg154.

It belongs to the SmpB family.

It is found in the cytoplasm. Functionally, required for rescue of stalled ribosomes mediated by trans-translation. Binds to transfer-messenger RNA (tmRNA), required for stable association of tmRNA with ribosomes. tmRNA and SmpB together mimic tRNA shape, replacing the anticodon stem-loop with SmpB. tmRNA is encoded by the ssrA gene; the 2 termini fold to resemble tRNA(Ala) and it encodes a 'tag peptide', a short internal open reading frame. During trans-translation Ala-aminoacylated tmRNA acts like a tRNA, entering the A-site of stalled ribosomes, displacing the stalled mRNA. The ribosome then switches to translate the ORF on the tmRNA; the nascent peptide is terminated with the 'tag peptide' encoded by the tmRNA and targeted for degradation. The ribosome is freed to recommence translation, which seems to be the essential function of trans-translation. This chain is SsrA-binding protein, found in Halalkalibacterium halodurans (strain ATCC BAA-125 / DSM 18197 / FERM 7344 / JCM 9153 / C-125) (Bacillus halodurans).